The primary structure comprises 93 residues: UPF0147 protein MJ1419 (93 aa).

The protein belongs to the UPF0147 family.

The chain is UPF0147 protein MJ1419 from Methanocaldococcus jannaschii (strain ATCC 43067 / DSM 2661 / JAL-1 / JCM 10045 / NBRC 100440) (Methanococcus jannaschii).